Reading from the N-terminus, the 394-residue chain is Penicillopepsin-3 (394 aa).

An N-terminal signal peptide occupies residues 1–20 (MVSFTQLQLAFLGLSALGAA). Residues 21 to 70 (VPVTGTSEKKTFSLNQVKVAGTKTKNPAEHYANALRKYGAEVPSHVLAAA) constitute a propeptide, activation peptide. Residues 87-392 (YLTPIDVGGT…DASGPRLGFA (306 aa)) enclose the Peptidase A1 domain. Catalysis depends on residues Asp-103 and Asp-284. An intrachain disulfide couples Cys-320 to Cys-355.

Belongs to the peptidase A1 family. As to quaternary structure, monomer.

It is found in the secreted. The catalysed reaction is Hydrolysis of proteins with broad specificity similar to that of pepsin A, preferring hydrophobic residues at P1 and P1', but also cleaving 20-Gly-|-Glu-21 in the B chain of insulin. Clots milk, and activates trypsinogen.. In terms of biological role, secreted aspartic endopeptidase that allows assimilation of proteinaceous substrates. The scissile peptide bond is attacked by a nucleophilic water molecule activated by two aspartic residues in the active site. Shows a broad primary substrate specificity. Favors hydrophobic residues at the P1 and P1' positions, but can also activate trypsinogen and hydrolyze the B chain of insulin between positions 'Gly-20' and 'Glu-21'. The protein is Penicillopepsin-3 of Penicillium janthinellum (Penicillium vitale).